Here is a 173-residue protein sequence, read N- to C-terminus: MTHPIFMVGARGCGKTTVGHQLAQALGYDFVDTDLFMQQTTNMTVADVVAQEGWHGFRQRESLALQQVASNRCIVATGGGMVLAEANRRFMHDKGIVIYLHADAELLAQRLEENPQDNQRPTLTGRPIAEEMADVLAAREALYRGAAHHVIDASQTPDAIVVSVLKALRLSAA.

An ATP-binding site is contributed by 12–17 (GCGKTT). The Mg(2+) site is built by T16 and D32. Substrate contacts are provided by D34, R58, and G79. Residues 112–126 (EENPQDNQRPTLTGR) are LID domain. R120 contributes to the ATP binding site. A substrate-binding site is contributed by R139. Residue Q155 coordinates ATP.

The protein belongs to the shikimate kinase family. AroL subfamily. In terms of assembly, monomer. The cofactor is Mg(2+).

It localises to the cytoplasm. It carries out the reaction shikimate + ATP = 3-phosphoshikimate + ADP + H(+). It participates in metabolic intermediate biosynthesis; chorismate biosynthesis; chorismate from D-erythrose 4-phosphate and phosphoenolpyruvate: step 5/7. Catalyzes the specific phosphorylation of the 3-hydroxyl group of shikimic acid using ATP as a cosubstrate. The polypeptide is Shikimate kinase 2 (Pectobacterium atrosepticum (strain SCRI 1043 / ATCC BAA-672) (Erwinia carotovora subsp. atroseptica)).